The sequence spans 219 residues: ATP-dependent Clp protease proteolytic subunit (219 aa).

Serine 101 (nucleophile) is an active-site residue. Histidine 126 is an active-site residue.

Belongs to the peptidase S14 family. Component of the chloroplastic Clp protease core complex.

The protein resides in the plastid. It is found in the chloroplast stroma. It catalyses the reaction Hydrolysis of proteins to small peptides in the presence of ATP and magnesium. alpha-casein is the usual test substrate. In the absence of ATP, only oligopeptides shorter than five residues are hydrolyzed (such as succinyl-Leu-Tyr-|-NHMec, and Leu-Tyr-Leu-|-Tyr-Trp, in which cleavage of the -Tyr-|-Leu- and -Tyr-|-Trp bonds also occurs).. Functionally, cleaves peptides in various proteins in a process that requires ATP hydrolysis. Has a chymotrypsin-like activity. Plays a major role in the degradation of misfolded proteins. The polypeptide is ATP-dependent Clp protease proteolytic subunit (Chara vulgaris (Common stonewort)).